Consider the following 83-residue polypeptide: DNA-directed RNA polymerase subunit Rpo5 (83 aa).

It belongs to the archaeal Rpo5/eukaryotic RPB5 RNA polymerase subunit family. In terms of assembly, part of the RNA polymerase complex.

It is found in the cytoplasm. It catalyses the reaction RNA(n) + a ribonucleoside 5'-triphosphate = RNA(n+1) + diphosphate. DNA-dependent RNA polymerase (RNAP) catalyzes the transcription of DNA into RNA using the four ribonucleoside triphosphates as substrates. This is DNA-directed RNA polymerase subunit Rpo5 from Metallosphaera sedula (strain ATCC 51363 / DSM 5348 / JCM 9185 / NBRC 15509 / TH2).